Reading from the N-terminus, the 354-residue chain is Uroporphyrinogen decarboxylase (354 aa).

Substrate contacts are provided by residues 27–31 (RQAGR), D77, Y154, T209, and H327.

It belongs to the uroporphyrinogen decarboxylase family. As to quaternary structure, homodimer.

The protein resides in the cytoplasm. The enzyme catalyses uroporphyrinogen III + 4 H(+) = coproporphyrinogen III + 4 CO2. It participates in porphyrin-containing compound metabolism; protoporphyrin-IX biosynthesis; coproporphyrinogen-III from 5-aminolevulinate: step 4/4. Catalyzes the decarboxylation of four acetate groups of uroporphyrinogen-III to yield coproporphyrinogen-III. This Salmonella paratyphi B (strain ATCC BAA-1250 / SPB7) protein is Uroporphyrinogen decarboxylase.